A 114-amino-acid polypeptide reads, in one-letter code: NADH-quinone oxidoreductase subunit K 2 (114 aa).

3 consecutive transmembrane segments (helical) span residues 1–21 (MIVPFGHVLLLAGALFGLGVF), 29–49 (LIMIVLGVEIMLNAASIAFIG), and 62–82 (FVLFILAVAATEVSIGLAIIV).

The protein belongs to the complex I subunit 4L family. NDH-1 is composed of 14 different subunits. Subunits NuoA, H, J, K, L, M, N constitute the membrane sector of the complex.

The protein resides in the cell inner membrane. It carries out the reaction a quinone + NADH + 5 H(+)(in) = a quinol + NAD(+) + 4 H(+)(out). NDH-1 shuttles electrons from NADH, via FMN and iron-sulfur (Fe-S) centers, to quinones in the respiratory chain. The immediate electron acceptor for the enzyme in this species is believed to be ubiquinone. Couples the redox reaction to proton translocation (for every two electrons transferred, four hydrogen ions are translocated across the cytoplasmic membrane), and thus conserves the redox energy in a proton gradient. The sequence is that of NADH-quinone oxidoreductase subunit K 2 from Syntrophobacter fumaroxidans (strain DSM 10017 / MPOB).